Consider the following 130-residue polypeptide: MSRKTLPEKVYLSERIIDEEVAVCTVAAEVLAIFTLVCTRVFIIFFTARICHGIWPSSPSERPYHTFRAARLRNSSKMVSSNCVLSECGQFKRLTANLSQTVSPSHFLNLIKAPLLIAQRCCECASGNGC.

The chain crosses the membrane as a helical span at residues 21–43 (VAVCTVAAEVLAIFTLVCTRVFI).

It localises to the membrane. This is an uncharacterized protein from Saccharomyces cerevisiae (strain ATCC 204508 / S288c) (Baker's yeast).